The chain runs to 450 residues: Tubulin alpha-3 chain (450 aa).

GTP contacts are provided by glutamine 11, glutamate 71, glycine 144, threonine 145, threonine 179, asparagine 206, and asparagine 228. Glutamate 71 is a Mg(2+) binding site. The active site involves glutamate 254.

Belongs to the tubulin family. Dimer of alpha and beta chains. A typical microtubule is a hollow water-filled tube with an outer diameter of 25 nm and an inner diameter of 15 nM. Alpha-beta heterodimers associate head-to-tail to form protofilaments running lengthwise along the microtubule wall with the beta-tubulin subunit facing the microtubule plus end conferring a structural polarity. Microtubules usually have 13 protofilaments but different protofilament numbers can be found in some organisms and specialized cells. Mg(2+) serves as cofactor. Undergoes a tyrosination/detyrosination cycle, the cyclic removal and re-addition of a C-terminal tyrosine residue by the enzymes tubulin tyrosine carboxypeptidase (TTCP) and tubulin tyrosine ligase (TTL), respectively.

It localises to the cytoplasm. Its subcellular location is the cytoskeleton. It catalyses the reaction GTP + H2O = GDP + phosphate + H(+). Its function is as follows. Tubulin is the major constituent of microtubules, a cylinder consisting of laterally associated linear protofilaments composed of alpha- and beta-tubulin heterodimers. Microtubules grow by the addition of GTP-tubulin dimers to the microtubule end, where a stabilizing cap forms. Below the cap, tubulin dimers are in GDP-bound state, owing to GTPase activity of alpha-tubulin. This Eleusine indica (Goosegrass) protein is Tubulin alpha-3 chain (TUBA3).